A 108-amino-acid polypeptide reads, in one-letter code: Large ribosomal subunit protein uL24 (108 aa).

It belongs to the universal ribosomal protein uL24 family. In terms of assembly, part of the 50S ribosomal subunit.

Its function is as follows. One of two assembly initiator proteins, it binds directly to the 5'-end of the 23S rRNA, where it nucleates assembly of the 50S subunit. In terms of biological role, one of the proteins that surrounds the polypeptide exit tunnel on the outside of the subunit. The chain is Large ribosomal subunit protein uL24 from Mycoplasma mycoides subsp. mycoides SC (strain CCUG 32753 / NCTC 10114 / PG1).